The sequence spans 890 residues: DNA mismatch repair protein MutS (890 aa).

607-614 (GPNMSGKS) provides a ligand contact to ATP.

Belongs to the DNA mismatch repair MutS family.

This protein is involved in the repair of mismatches in DNA. It is possible that it carries out the mismatch recognition step. This protein has a weak ATPase activity. The polypeptide is DNA mismatch repair protein MutS (Bacillus thuringiensis subsp. konkukian (strain 97-27)).